Reading from the N-terminus, the 54-residue chain is Kazal-type inhibitor-like protein (54 aa).

A Kazal-like domain is found at 1-54 (MKVNCKGYPTKFCFGKPLPHCASDGKTYPNRCRFCNAFVKSHGLITLRYYGKCK). Cystine bridges form between C5/C35, C13/C32, and C21/C53.

May form disulfide-linked dimers or trimers (in vitro). In terms of tissue distribution, expressed by the venom gland.

Its subcellular location is the secreted. In terms of biological role, partially inhibits trypsin in vitro at slightly acidic pH and concentrations in excess of 0.3 mM. Has no protease inhibitory activity at neutral or basic pH. Has no antibacterial activity. Shows no toxicity in vertebrates apart from transient paw edema in mouse. The sequence is that of Kazal-type inhibitor-like protein from Bothriechis schlegelii (Eyelash palm pitviper).